The following is a 154-amino-acid chain: tRNA (cytidine(34)-2'-O)-methyltransferase (154 aa).

S-adenosyl-L-methionine is bound by residues L78, G100, L122, and S130.

The protein belongs to the class IV-like SAM-binding methyltransferase superfamily. RNA methyltransferase TrmH family. TrmL subfamily. As to quaternary structure, homodimer.

The protein resides in the cytoplasm. It catalyses the reaction cytidine(34) in tRNA + S-adenosyl-L-methionine = 2'-O-methylcytidine(34) in tRNA + S-adenosyl-L-homocysteine + H(+). The enzyme catalyses 5-carboxymethylaminomethyluridine(34) in tRNA(Leu) + S-adenosyl-L-methionine = 5-carboxymethylaminomethyl-2'-O-methyluridine(34) in tRNA(Leu) + S-adenosyl-L-homocysteine + H(+). Methylates the ribose at the nucleotide 34 wobble position in the two leucyl isoacceptors tRNA(Leu)(CmAA) and tRNA(Leu)(cmnm5UmAA). Catalyzes the methyl transfer from S-adenosyl-L-methionine to the 2'-OH of the wobble nucleotide. The polypeptide is tRNA (cytidine(34)-2'-O)-methyltransferase (Methylovorus glucosotrophus (strain SIP3-4)).